A 394-amino-acid chain; its full sequence is Methane monooxygenase component A beta chain (394 aa).

As to quaternary structure, m.trichosporium has two forms of methane monooxygenase, a soluble and a membrane-bound type. The soluble type consists of four components (A to D): protein A, comprising three chains, in an alpha-2, beta-2, gamma-2 configuration, is a nonheme iron protein containing an unusual mu-hydroxo bridge structure at its active site and interacts with both oxygen and methane.

It carries out the reaction methane + NADH + O2 + H(+) = methanol + NAD(+) + H2O. It catalyses the reaction methane + NADPH + O2 + H(+) = methanol + NADP(+) + H2O. In terms of biological role, responsible for the initial oxygenation of methane to methanol in methanotrophs. It also catalyzes the monohydroxylation of a variety of unactivated alkenes, alicyclic, aromatic and heterocyclic compounds. The chain is Methane monooxygenase component A beta chain (mmoY) from Methylosinus trichosporium.